Consider the following 113-residue polypeptide: U11-theraphotoxin-Hhn1j (113 aa).

Positions 1-21 are cleaved as a signal peptide; sequence MNTVRVTFLLVFVLAVSLGQA. The propeptide occupies 22-74; that stretch reads DKDENRMEMQEKTEQGKSYLDFAENLLLQKLEELEAKLLEEDSEESRNSRQKR. A compositionally biased stretch (basic and acidic residues) spans 60 to 69; sequence LEEDSEESRN. The disordered stretch occupies residues 60-83; it reads LEEDSEESRNSRQKRCIGEGVPCD. Intrachain disulfides connect C75–C90, C82–C95, and C89–C110.

Belongs to the neurotoxin 14 (magi-1) family. 01 (HNTX-16) subfamily. Expressed by the venom gland.

Its subcellular location is the secreted. In terms of biological role, probable ion channel inhibitor. This Cyriopagopus hainanus (Chinese bird spider) protein is U11-theraphotoxin-Hhn1j.